The sequence spans 351 residues: Holliday junction branch migration complex subunit RuvB (351 aa).

The segment at 4–185 (HDRELVSPEA…FGFVAHMDFY (182 aa)) is large ATPase domain (RuvB-L). ATP-binding positions include Leu-24, Arg-25, Gly-66, Lys-69, Thr-70, Thr-71, 132 to 134 (EDF), Arg-175, Tyr-185, and Arg-222. Residue Thr-70 participates in Mg(2+) binding. The tract at residues 186 to 256 (SPEELELILH…CARAALSLYE (71 aa)) is small ATPAse domain (RuvB-S). Residues 259 to 351 (DEGLDRLDRA…AALFDPDEEP (93 aa)) are head domain (RuvB-H). Residues Arg-314 and Arg-319 each contribute to the DNA site.

It belongs to the RuvB family. Homohexamer. Forms an RuvA(8)-RuvB(12)-Holliday junction (HJ) complex. HJ DNA is sandwiched between 2 RuvA tetramers; dsDNA enters through RuvA and exits via RuvB. An RuvB hexamer assembles on each DNA strand where it exits the tetramer. Each RuvB hexamer is contacted by two RuvA subunits (via domain III) on 2 adjacent RuvB subunits; this complex drives branch migration. In the full resolvosome a probable DNA-RuvA(4)-RuvB(12)-RuvC(2) complex forms which resolves the HJ.

The protein localises to the cytoplasm. The catalysed reaction is ATP + H2O = ADP + phosphate + H(+). Its function is as follows. The RuvA-RuvB-RuvC complex processes Holliday junction (HJ) DNA during genetic recombination and DNA repair, while the RuvA-RuvB complex plays an important role in the rescue of blocked DNA replication forks via replication fork reversal (RFR). RuvA specifically binds to HJ cruciform DNA, conferring on it an open structure. The RuvB hexamer acts as an ATP-dependent pump, pulling dsDNA into and through the RuvAB complex. RuvB forms 2 homohexamers on either side of HJ DNA bound by 1 or 2 RuvA tetramers; 4 subunits per hexamer contact DNA at a time. Coordinated motions by a converter formed by DNA-disengaged RuvB subunits stimulates ATP hydrolysis and nucleotide exchange. Immobilization of the converter enables RuvB to convert the ATP-contained energy into a lever motion, pulling 2 nucleotides of DNA out of the RuvA tetramer per ATP hydrolyzed, thus driving DNA branch migration. The RuvB motors rotate together with the DNA substrate, which together with the progressing nucleotide cycle form the mechanistic basis for DNA recombination by continuous HJ branch migration. Branch migration allows RuvC to scan DNA until it finds its consensus sequence, where it cleaves and resolves cruciform DNA. This Thermobifida fusca (strain YX) protein is Holliday junction branch migration complex subunit RuvB.